The chain runs to 547 residues: CTP synthase (547 aa).

Positions 1–265 are amidoligase domain; it reads MARYVFITGG…DQAVLDAFGI (265 aa). Residue serine 13 participates in CTP binding. A UTP-binding site is contributed by serine 13. Residues 14 to 19 and aspartate 71 each bind ATP; that span reads SLGKGL. Residues aspartate 71 and glutamate 139 each coordinate Mg(2+). CTP is bound by residues 146 to 148, 186 to 191, and lysine 222; these read DIE and KTKPTQ. Residues 186–191 and lysine 222 contribute to the UTP site; that span reads KTKPTQ. The 256-residue stretch at 291–546 folds into the Glutamine amidotransferase type-1 domain; that stretch reads RVAIVGKYTQ…VRAAVEVSRL (256 aa). Glycine 353 provides a ligand contact to L-glutamine. The active-site Nucleophile; for glutamine hydrolysis is the cysteine 380. Residues 381-384, glutamate 404, and arginine 474 contribute to the L-glutamine site; that span reads LGMQ. Residues histidine 519 and glutamate 521 contribute to the active site.

The protein belongs to the CTP synthase family. Homotetramer.

The enzyme catalyses UTP + L-glutamine + ATP + H2O = CTP + L-glutamate + ADP + phosphate + 2 H(+). It catalyses the reaction L-glutamine + H2O = L-glutamate + NH4(+). It carries out the reaction UTP + NH4(+) + ATP = CTP + ADP + phosphate + 2 H(+). It functions in the pathway pyrimidine metabolism; CTP biosynthesis via de novo pathway; CTP from UDP: step 2/2. Allosterically activated by GTP, when glutamine is the substrate; GTP has no effect on the reaction when ammonia is the substrate. The allosteric effector GTP functions by stabilizing the protein conformation that binds the tetrahedral intermediate(s) formed during glutamine hydrolysis. Inhibited by the product CTP, via allosteric rather than competitive inhibition. In terms of biological role, catalyzes the ATP-dependent amination of UTP to CTP with either L-glutamine or ammonia as the source of nitrogen. Regulates intracellular CTP levels through interactions with the four ribonucleotide triphosphates. This Cereibacter sphaeroides (strain ATCC 17029 / ATH 2.4.9) (Rhodobacter sphaeroides) protein is CTP synthase.